The following is a 328-amino-acid chain: Malate dehydrogenase (328 aa).

12-18 (GAAGQIG) is a binding site for NAD(+). 2 residues coordinate substrate: arginine 95 and arginine 101. NAD(+)-binding positions include asparagine 108, glutamine 115, and 132 to 134 (VGN). 2 residues coordinate substrate: asparagine 134 and arginine 165. The active-site Proton acceptor is the histidine 190.

This sequence belongs to the LDH/MDH superfamily. MDH type 2 family.

It carries out the reaction (S)-malate + NAD(+) = oxaloacetate + NADH + H(+). Catalyzes the reversible oxidation of malate to oxaloacetate. The polypeptide is Malate dehydrogenase (Leptothrix cholodnii (strain ATCC 51168 / LMG 8142 / SP-6) (Leptothrix discophora (strain SP-6))).